We begin with the raw amino-acid sequence, 884 residues long: DNA replication licensing factor mcm2 (884 aa).

Positions 1 to 16 are enriched in polar residues; it reads MADSSESFNIATSPRT. Disordered stretches follow at residues 1–61 and 120–151; these read MADS…IGDA and LYDSDEEDEDRPARKRRMAERAAEGAPEEDEE. The segment covering 47–58 has biased composition (acidic residues); that stretch reads PREEEEDGEELI. Residues 314 to 340 form a C4-type zinc finger; that stretch reads CNKCNFILGPFFQSQNQEVKPGSCPEC. In terms of domain architecture, MCM spans 458–664; sequence IGERIFASIA…VQDEMLARFV (207 aa). The ADP site is built by serine 515 and glutamine 516. The Arginine finger motif lies at 640–643; it reads SRFD.

This sequence belongs to the MCM family. Component of the mcm2-7 complex (RLF-M). The complex forms a toroidal hexameric ring with the proposed subunit order mcm2-mcm6-mcm4-mcm7-mcm3-mcm5. Component of the replisome complex. Component of the CMG helicase complex, composed of the mcm2-7 complex, the GINS complex and cdc45. May be in a phosphorylated state in the mitotic mcm complex. Phosphorylated in the interphase mcm complex. Phosphorylated by the cdc7-dbf4 and cdc7-dbf4b complexes.

It localises to the nucleus. Its subcellular location is the chromosome. It catalyses the reaction ATP + H2O = ADP + phosphate + H(+). Functionally, acts as a component of the MCM2-7 complex (MCM complex) which is the replicative helicase essential for 'once per cell cycle' DNA replication initiation and elongation in eukaryotic cells. Core component of CDC45-MCM-GINS (CMG) helicase, the molecular machine that unwinds template DNA during replication, and around which the replisome is built. The active ATPase sites in the MCM2-7 ring are formed through the interaction surfaces of two neighboring subunits such that a critical structure of a conserved arginine finger motif is provided in trans relative to the ATP-binding site of the Walker A box of the adjacent subunit. The six ATPase active sites, however, are likely to contribute differentially to the complex helicase activity. Required for the entry in S phase and for cell division. This chain is DNA replication licensing factor mcm2, found in Xenopus tropicalis (Western clawed frog).